The following is a 291-amino-acid chain: Gamma-sarcoglycan (291 aa).

A helical; Signal-anchor for type II membrane protein membrane pass occupies residues 38–58; the sequence is LFVLLLLIVLLVNFALTIWIL. The Extracellular portion of the chain corresponds to 59–291; the sequence is RVMWFSPVGM…TCHEHSHLCL (233 aa). N-linked (GlcNAc...) asparagine glycosylation is present at Asn-110. 2 cysteine pairs are disulfide-bonded: Cys-265–Cys-290 and Cys-267–Cys-283.

It belongs to the sarcoglycan beta/delta/gamma/zeta family. In terms of assembly, interacts with the syntrophin SNTA1. Cross-link to form 2 major subcomplexes: one consisting of SGCB, SGCD and SGCG and the other consisting of SGCB and SGCD. The association between SGCB and SGCG is particularly strong while SGCA is loosely associated with the other sarcoglycans. Interacts with FLNC. Post-translationally, disulfide bonds are present.

It localises to the cell membrane. Its subcellular location is the sarcolemma. The protein resides in the cytoplasm. It is found in the cytoskeleton. Component of the sarcoglycan complex, a subcomplex of the dystrophin-glycoprotein complex which forms a link between the F-actin cytoskeleton and the extracellular matrix. This Bos taurus (Bovine) protein is Gamma-sarcoglycan (SGCG).